The primary structure comprises 219 residues: Cytidylate kinase (219 aa).

An ATP-binding site is contributed by 10–18 (GPAAAGKST).

The protein belongs to the cytidylate kinase family. Type 1 subfamily.

The protein resides in the cytoplasm. It carries out the reaction CMP + ATP = CDP + ADP. The enzyme catalyses dCMP + ATP = dCDP + ADP. The protein is Cytidylate kinase of Staphylococcus aureus (strain MRSA252).